A 97-amino-acid chain; its full sequence is YcgL domain-containing protein PFLU_1517 (97 aa).

A YcgL domain is found at 3-87; it reads RICSIYRSKK…AEDEYIEHLP (85 aa).

This chain is YcgL domain-containing protein PFLU_1517, found in Pseudomonas fluorescens (strain SBW25).